The chain runs to 174 residues: Myeloid-derived growth factor (174 aa).

The N-terminal stretch at 1-32 is a signal peptide; sequence MAAPSGRRNGSGGANLWVSLLLAAAALRPVET.

It belongs to the MYDGF family.

It is found in the secreted. It localises to the endoplasmic reticulum-Golgi intermediate compartment. Its subcellular location is the endoplasmic reticulum. The protein localises to the golgi apparatus. Its function is as follows. Bone marrow-derived monocyte and paracrine-acting protein that promotes cardiac myocyte survival and adaptive angiogenesis for cardiac protection and/or repair after myocardial infarction (MI). Stimulates endothelial cell proliferation through a MAPK1/3-, STAT3- and CCND1-mediated signaling pathway. Inhibits cardiac myocyte apoptosis in a PI3K/AKT-dependent signaling pathway. This is Myeloid-derived growth factor from Bos taurus (Bovine).